A 348-amino-acid polypeptide reads, in one-letter code: Holliday junction branch migration complex subunit RuvB (348 aa).

A large ATPase domain (RuvB-L) region spans residues D3–Y183. ATP is bound by residues L22, R23, G64, K67, T68, S69, E130 to F132, R173, Y183, and R220. A Mg(2+)-binding site is contributed by T68. Residues D184 to D254 are small ATPAse domain (RuvB-S). Residues G257 to E348 are head domain (RuvB-H). The DNA site is built by R312 and R317.

This sequence belongs to the RuvB family. As to quaternary structure, homohexamer. Forms an RuvA(8)-RuvB(12)-Holliday junction (HJ) complex. HJ DNA is sandwiched between 2 RuvA tetramers; dsDNA enters through RuvA and exits via RuvB. An RuvB hexamer assembles on each DNA strand where it exits the tetramer. Each RuvB hexamer is contacted by two RuvA subunits (via domain III) on 2 adjacent RuvB subunits; this complex drives branch migration. In the full resolvosome a probable DNA-RuvA(4)-RuvB(12)-RuvC(2) complex forms which resolves the HJ.

The protein localises to the cytoplasm. It carries out the reaction ATP + H2O = ADP + phosphate + H(+). The RuvA-RuvB-RuvC complex processes Holliday junction (HJ) DNA during genetic recombination and DNA repair, while the RuvA-RuvB complex plays an important role in the rescue of blocked DNA replication forks via replication fork reversal (RFR). RuvA specifically binds to HJ cruciform DNA, conferring on it an open structure. The RuvB hexamer acts as an ATP-dependent pump, pulling dsDNA into and through the RuvAB complex. RuvB forms 2 homohexamers on either side of HJ DNA bound by 1 or 2 RuvA tetramers; 4 subunits per hexamer contact DNA at a time. Coordinated motions by a converter formed by DNA-disengaged RuvB subunits stimulates ATP hydrolysis and nucleotide exchange. Immobilization of the converter enables RuvB to convert the ATP-contained energy into a lever motion, pulling 2 nucleotides of DNA out of the RuvA tetramer per ATP hydrolyzed, thus driving DNA branch migration. The RuvB motors rotate together with the DNA substrate, which together with the progressing nucleotide cycle form the mechanistic basis for DNA recombination by continuous HJ branch migration. Branch migration allows RuvC to scan DNA until it finds its consensus sequence, where it cleaves and resolves cruciform DNA. In Frankia casuarinae (strain DSM 45818 / CECT 9043 / HFP020203 / CcI3), this protein is Holliday junction branch migration complex subunit RuvB.